Reading from the N-terminus, the 351-residue chain is L-threonine 3-dehydrogenase (351 aa).

Cysteine 39 contacts Zn(2+). Catalysis depends on charge relay system residues threonine 41 and histidine 44. Residues histidine 64, glutamate 65, cysteine 94, cysteine 97, cysteine 100, and cysteine 108 each contribute to the Zn(2+) site. NAD(+) is bound by residues isoleucine 176, aspartate 196, arginine 201, 271 to 273 (LGI), and 295 to 296 (IY).

It belongs to the zinc-containing alcohol dehydrogenase family. In terms of assembly, homotetramer. It depends on Zn(2+) as a cofactor.

The protein localises to the cytoplasm. It carries out the reaction L-threonine + NAD(+) = (2S)-2-amino-3-oxobutanoate + NADH + H(+). The protein operates within amino-acid degradation; L-threonine degradation via oxydo-reductase pathway; glycine from L-threonine: step 1/2. Its function is as follows. Catalyzes the NAD(+)-dependent oxidation of L-threonine to 2-amino-3-ketobutyrate. The chain is L-threonine 3-dehydrogenase from Francisella tularensis subsp. novicida (strain U112).